The sequence spans 327 residues: MAKPIRVLLYYKYVPIENAEQFAADHLAFCKSIGLKGRILVADEGINGTVSGDYETTQKYMDYVHSLPGMEDLWFKIDEEEEQAFKKMFVRYKKEIVHLGLEDNNFDSDINPLETTGAYLSPKEFKDALLDEDTVVLDTRNDYEYDLGHFRGAIRPDIRNFRELPQWVRDHKEEFMDKRVVVYCTGGVRCEKFSGWLVREGYKDVGQLHGGIVTYGKDPEVQGELWDGKLYVFDERIAVDVNHVDPIVVGKDWFDGTPCERYVNCGNPFCNRRILTSEENEDKYLRGCSHECRVHPRNRYVSENDLSQEEVVERLAAIGESLDVTPA.

One can recognise a Rhodanese domain in the interval 130–224; sequence LDEDTVVLDT…YGKDPEVQGE (95 aa). The active-site Cysteine persulfide intermediate is the cysteine 184.

It belongs to the TrhO family.

It catalyses the reaction uridine(34) in tRNA + AH2 + O2 = 5-hydroxyuridine(34) in tRNA + A + H2O. In terms of biological role, catalyzes oxygen-dependent 5-hydroxyuridine (ho5U) modification at position 34 in tRNAs. This is tRNA uridine(34) hydroxylase from Streptococcus thermophilus (strain CNRZ 1066).